Consider the following 54-residue polypeptide: Lectin alpha-1 chain (54 aa).

It belongs to the leguminous lectin family. In terms of assembly, tetramer of two alpha and two beta chains.

The chain is Lectin alpha-1 chain from Lathyrus hirsutus (Rough pea).